The sequence spans 116 residues: Ribonuclease P protein component (116 aa).

It belongs to the RnpA family. In terms of assembly, consists of a catalytic RNA component (M1 or rnpB) and a protein subunit.

The enzyme catalyses Endonucleolytic cleavage of RNA, removing 5'-extranucleotides from tRNA precursor.. In terms of biological role, RNaseP catalyzes the removal of the 5'-leader sequence from pre-tRNA to produce the mature 5'-terminus. It can also cleave other RNA substrates such as 4.5S RNA. The protein component plays an auxiliary but essential role in vivo by binding to the 5'-leader sequence and broadening the substrate specificity of the ribozyme. The protein is Ribonuclease P protein component of Thermoanaerobacter pseudethanolicus (strain ATCC 33223 / 39E) (Clostridium thermohydrosulfuricum).